The following is a 180-amino-acid chain: Cytochrome b6-f complex iron-sulfur subunit 2 (180 aa).

Residues 21 to 43 (LLTFGTITGVAAGALYPAVKYLI) form a helical membrane-spanning segment. Residues 66 to 162 (VTEFLASHNA…ATVTDDDKLV (97 aa)) form the Rieske domain. Residues C108, H110, C126, and H129 each contribute to the [2Fe-2S] cluster site. C113 and C128 are disulfide-bonded.

The protein belongs to the Rieske iron-sulfur protein family. The 4 large subunits of the cytochrome b6-f complex are cytochrome b6, subunit IV (17 kDa polypeptide, PetD), cytochrome f and the Rieske protein, while the 4 small subunits are PetG, PetL, PetM and PetN. The complex functions as a dimer. It depends on [2Fe-2S] cluster as a cofactor.

The protein localises to the cellular thylakoid membrane. The catalysed reaction is 2 oxidized [plastocyanin] + a plastoquinol + 2 H(+)(in) = 2 reduced [plastocyanin] + a plastoquinone + 4 H(+)(out). In terms of biological role, component of the cytochrome b6-f complex, which mediates electron transfer between photosystem II (PSII) and photosystem I (PSI), cyclic electron flow around PSI, and state transitions. The protein is Cytochrome b6-f complex iron-sulfur subunit 2 of Synechocystis sp. (strain ATCC 27184 / PCC 6803 / Kazusa).